A 308-amino-acid chain; its full sequence is Palmitoyltransferase ZDHHC7 (308 aa).

At M1 to C50 the chain is on the cytoplasmic side. Residues A51–L71 form a helical membrane-spanning segment. Residues P72–D75 are Lumenal-facing. A helical membrane pass occupies residues F76 to S96. At H97–R173 the chain is on the cytoplasmic side. Positions Y130 to M180 constitute a DHHC domain. C160 (S-palmitoyl cysteine intermediate) is an active-site residue. The chain crosses the membrane as a helical span at residues F174–G194. Residues L195 to V217 lie on the Lumenal side of the membrane. Residues I218–F238 form a helical membrane-spanning segment. At G239–V308 the chain is on the cytoplasmic side.

This sequence belongs to the DHHC palmitoyltransferase family. In terms of assembly, homooligomers. Heterooligomers with ZDHHC3. Autopalmitoylated. As to expression, ubiquitously expressed, with highest levels in liver, kidney and brain. Expressed in all brain regions.

It localises to the golgi apparatus membrane. It carries out the reaction L-cysteinyl-[protein] + hexadecanoyl-CoA = S-hexadecanoyl-L-cysteinyl-[protein] + CoA. The enzyme catalyses L-cysteinyl-[protein] + tetradecanoyl-CoA = S-tetradecanoyl-L-cysteinyl-[protein] + CoA. It catalyses the reaction L-cysteinyl-[protein] + octadecanoyl-CoA = S-octadecanoyl-L-cysteinyl-[protein] + CoA. Functionally, golgi-localized palmitoyltransferase that catalyzes the addition of palmitate onto various protein substrates and therefore functions in several unrelated biological processes. Has no stringent fatty acid selectivity and in addition to palmitate can also transfer onto target proteins myristate from tetradecanoyl-CoA and stearate from octadecanoyl-CoA. Palmitoylates sex steroid hormone receptors, including ESR1, PGR and AR, thereby regulating their targeting to the plasma membrane and their function in rapid intracellular signaling upon binding of sex hormones. Palmitoylates GNAQ, a heterotrimeric G protein, regulating its dynamic localization at the plasma membrane and is thereby involved in GNAQ-dependent G protein-coupled receptor signaling pathways. Also functions in ligand-induced cell death by regulating the FAS signaling pathway through the palmitoylation and stabilization of the receptor at the plasma membrane. In epithelial cells, palmitoylates SCRIB and regulates its localization to the plasma membrane, regulating indirectly cell polarity and differentiation. Also palmitoylates JAM3 and promotes its expression at tight junctions and regulates its function in cell migration. Palmitoylates the glucose transporter GLUT4/SLC2A4 and controls the insulin-dependent translocation of GLUT4 to the plasma membrane. In brain, could also palmitoylate SNAP25 and DLG4/PSD95. Could also palmitoylate DNAJC5 and regulate its localization to the Golgi membrane. Could also palmitoylate NCDN. May play a role in follicle stimulation hormone (FSH) activation of testicular Sertoli cells. Activates pyroptosis by catalyzing palmitoylation of gasdermin-D (GSDMD). The polypeptide is Palmitoyltransferase ZDHHC7 (Mus musculus (Mouse)).